The following is a 278-amino-acid chain: 2-dehydro-3-deoxyphosphooctonate aldolase (278 aa).

Belongs to the KdsA family.

It localises to the cytoplasm. It carries out the reaction D-arabinose 5-phosphate + phosphoenolpyruvate + H2O = 3-deoxy-alpha-D-manno-2-octulosonate-8-phosphate + phosphate. The protein operates within carbohydrate biosynthesis; 3-deoxy-D-manno-octulosonate biosynthesis; 3-deoxy-D-manno-octulosonate from D-ribulose 5-phosphate: step 2/3. It participates in bacterial outer membrane biogenesis; lipopolysaccharide biosynthesis. The polypeptide is 2-dehydro-3-deoxyphosphooctonate aldolase (Koribacter versatilis (strain Ellin345)).